A 43-amino-acid polypeptide reads, in one-letter code: Protein PsbN (43 aa).

The helical transmembrane segment at 4-24 (AIVLSISMAAVVVAITGISIY) threads the bilayer.

Belongs to the PsbN family.

It localises to the cellular thylakoid membrane. Its function is as follows. May play a role in photosystem I and II biogenesis. This is Protein PsbN from Nostoc punctiforme (strain ATCC 29133 / PCC 73102).